The chain runs to 597 residues: MCGIVGYIGDSEKKSILLEGLKELEYRGYDSAGLAVLSANRLEVFKTQGKLENLRTELKNKEFLNFGVSIAHTRWATHGKPSSANAHPHFTENLALVHNGIIENYASLKKELENKGHAFLSQTDTEVIAHLLEETLKSEGDLLKAFEKSISLLKGSYAILMLHKRAKESLFYAKSSSPLIVGKGKEGVFFASSLSVLAPKVDQFVILEENSVGQISLENFKDLNNIENMKDYAFENKDYSKGNFRNYLEKEIYEQHSSLLECLEGRLEALSVYCEIDPEFLENVSEITLCSCGSSYHASLASVYLFERLAKIRARAILASEYRYAHFKSNPNELFIAISQSGETADTLEALKLAKAQGLKTISLCNAPFSMMSRISDHTLLIRAGVERSVASTKAFSSQVMLLWLLSVYLGKQLGTISKEEERIQAKNMLNSVKAMKVEPKLHEKIKRLSKRYLHGHGFFYIGRDVFYPLALEGALKLKEISYLHAEGYASAEMKHGPIALVDSNLFTIALLSKHLLFDKTKSNIEELSARDSTICVLSSEILEIADDFIQLEESESYMEEFFRMNLAMQLLALEIAMRLNHDVDHPRNLAKSVTVE.

Cys-2 functions as the Nucleophile; for GATase activity in the catalytic mechanism. Positions 2–218 (CGIVGYIGDS…ENSVGQISLE (217 aa)) constitute a Glutamine amidotransferase type-2 domain. SIS domains follow at residues 276–416 (IDPE…QLGT) and 449–587 (LSKR…VDHP). The active-site For Fru-6P isomerization activity is Lys-592.

Homodimer.

The protein resides in the cytoplasm. The catalysed reaction is D-fructose 6-phosphate + L-glutamine = D-glucosamine 6-phosphate + L-glutamate. Functionally, catalyzes the first step in hexosamine metabolism, converting fructose-6P into glucosamine-6P using glutamine as a nitrogen source. The protein is Glutamine--fructose-6-phosphate aminotransferase [isomerizing] of Helicobacter pylori (strain J99 / ATCC 700824) (Campylobacter pylori J99).